The sequence spans 153 residues: Transcriptional repressor NrdR (153 aa).

A disordered region spans residues 1-22 (MRCPACHHNGTRVLDSRPAHEG). The segment at 3–34 (CPACHHNGTRVLDSRPAHEGRSIRRRRECESC) is a zinc-finger region. The ATP-cone domain occupies 49–139 (LIVVKKDGTR…VYRQFKDINV (91 aa)).

Belongs to the NrdR family. Zn(2+) is required as a cofactor.

Negatively regulates transcription of bacterial ribonucleotide reductase nrd genes and operons by binding to NrdR-boxes. In Halalkalibacterium halodurans (strain ATCC BAA-125 / DSM 18197 / FERM 7344 / JCM 9153 / C-125) (Bacillus halodurans), this protein is Transcriptional repressor NrdR.